Reading from the N-terminus, the 777-residue chain is Serine/threonine-protein kinase PLK4 (777 aa).

The region spanning 14-268 (YEVQHLLGKG…LEQVLRHPFL (255 aa)) is the Protein kinase domain. ATP-binding positions include 20–28 (LGKGGFASV) and Lys43. Asp139 acts as the Proton acceptor in catalysis. Polar residues predominate over residues 371–381 (TNNLAPFTSDS). The tract at residues 371–390 (TNNLAPFTSDSDMIPSPVGE) is disordered. A Cryptic POLO box 1 (CPB1) domain is found at 390–507 (EKRLLMPPLE…ARFVGLVKSK (118 aa)). In terms of domain architecture, Cryptic POLO box 2 (CPB2) spans 508-611 (TPKITFFSSL…GRRPAADMHA (104 aa)). One can recognise a POLO box domain in the interval 669–748 (PIKRITVPEI…MPQLQMKLKC (80 aa)).

It belongs to the protein kinase superfamily. Ser/Thr protein kinase family. CDC5/Polo subfamily. Homodimer. Post-translationally, ubiquitinated by the SCF(Slimb) ubiquitin ligase complex; leading to its degradation by the proteasome during interphase and regulating centriole number and ensuring the block to centriole reduplication.

It is found in the cytoplasm. The protein localises to the cytoskeleton. Its subcellular location is the microtubule organizing center. The protein resides in the centrosome. It localises to the centriole. The enzyme catalyses L-seryl-[protein] + ATP = O-phospho-L-seryl-[protein] + ADP + H(+). The catalysed reaction is L-threonyl-[protein] + ATP = O-phospho-L-threonyl-[protein] + ADP + H(+). Serine/threonine-protein kinase that plays a central role in centriole duplication. Able to trigger procentriole formation on the surface of the mother centriole cylinder, using mother centriole as a platform, leading to the recruitment of centriole biogenesis proteins such as sas-6. When overexpressed, it is able to induce centrosome amplification through the simultaneous generation of multiple procentrioles adjoining each parental centriole during S phase. Centrosome amplification following overexpression can initiate tumorigenesis, highlighting the importance of centrosome regulation in cancers. In Drosophila pseudoobscura pseudoobscura (Fruit fly), this protein is Serine/threonine-protein kinase PLK4 (SAK).